The primary structure comprises 446 residues: MPNPKKPKIAFAHLGCDKNRVDTEHMIGLLAAAGYGVGTDETEADYVIVNTCSFIQAAREESVRTLVELAEANKKIVITGCLAQHFQGELLAELPEAVAVVGSGDYQHIVEVIERVERGERVQQISAVPTYIADETVPRYRTTPAPVAYLRIAEGCDYRCAFCIIPHLRGNQRSRSLESIVSEAHQLAAEGVQEIIIVSQITTNYGLDRYGQPQLATLIRALGEVDVPWIRLHYAYPTGLTPEVIAAMRETPNILPYLDLPLQHSHPEVLRAMNRPWQAGVNDRLIERLRQELPEAVVRTTFIVGFPGETESQFEHLCQFVQRHEFDHVGVFTYSPEEGTAAYDLPHQIPEEIKRARRDRLMELQQPIAQRKNAAEVGKIVPVLIEQENPQTGEFIGRSPRFAPEVDGVVYVKGAATLGTIVPVEITAADIYDLYGIIPASVRFYP.

Residues 7-118 (PKIAFAHLGC…IVEVIERVER (112 aa)) form the MTTase N-terminal domain. [4Fe-4S] cluster contacts are provided by Cys16, Cys52, Cys81, Cys156, Cys160, and Cys163. The Radical SAM core domain occupies 142–371 (TTPAPVAYLR…MELQQPIAQR (230 aa)). The region spanning 374–440 (AAEVGKIVPV…IYDLYGIIPA (67 aa)) is the TRAM domain.

The protein belongs to the methylthiotransferase family. RimO subfamily. It depends on [4Fe-4S] cluster as a cofactor.

The protein resides in the cytoplasm. The enzyme catalyses L-aspartate(89)-[ribosomal protein uS12]-hydrogen + (sulfur carrier)-SH + AH2 + 2 S-adenosyl-L-methionine = 3-methylsulfanyl-L-aspartate(89)-[ribosomal protein uS12]-hydrogen + (sulfur carrier)-H + 5'-deoxyadenosine + L-methionine + A + S-adenosyl-L-homocysteine + 2 H(+). Its function is as follows. Catalyzes the methylthiolation of an aspartic acid residue of ribosomal protein uS12. This is Ribosomal protein uS12 methylthiotransferase RimO from Thermosynechococcus vestitus (strain NIES-2133 / IAM M-273 / BP-1).